Consider the following 373-residue polypeptide: Putative 8-amino-7-oxononanoate synthase (373 aa).

Arg18 provides a ligand contact to substrate. Residue 93-94 (GF) coordinates pyridoxal 5'-phosphate. His118 contacts substrate. Pyridoxal 5'-phosphate contacts are provided by residues Ser166, 191–194 (DEAH), and 220–223 (TLSK). At Lys223 the chain carries N6-(pyridoxal phosphate)lysine. Residue Thr337 participates in substrate binding.

Belongs to the class-II pyridoxal-phosphate-dependent aminotransferase family. BioF subfamily. In terms of assembly, homodimer. The cofactor is pyridoxal 5'-phosphate.

The catalysed reaction is 6-carboxyhexanoyl-[ACP] + L-alanine + H(+) = (8S)-8-amino-7-oxononanoate + holo-[ACP] + CO2. Its pathway is cofactor biosynthesis; biotin biosynthesis. Functionally, catalyzes the decarboxylative condensation of pimeloyl-[acyl-carrier protein] and L-alanine to produce 8-amino-7-oxononanoate (AON), [acyl-carrier protein], and carbon dioxide. The chain is Putative 8-amino-7-oxononanoate synthase (bioF) from Aquifex aeolicus (strain VF5).